The sequence spans 324 residues: Antihemorrhagic factor jMSF (324 aa).

Positions 1-19 (MHFLVALVLLGQIIGSTLS) are cleaved as a signal peptide. Cystatin fetuin-A-type domains are found at residues 22–130 (VRGD…VKCH) and 141–254 (RNCP…SDCV). The short motif at 23-25 (RGD) is the Cell attachment site element. 7 disulfides stabilise this stretch: C28-C315, C85-C96, C110-C129, C143-C146, C205-C217, C230-C253, and C287-C291. A glycan (N-linked (GlcNAc...) asparagine) is linked at N204. N-linked (GlcNAc...) asparagine glycosylation occurs at N282.

Homodimer. As to expression, expressed by the liver.

It is found in the secreted. Suppress hemorrhage induced by metalloproteinases from the same venom (brevilysin-H3, -H4, -H6) and from habu venom (weak inhibition of the metalloproteinases HR2A). The non-hemorrhagic brevilysin-H2 is strongly inhibited by jMSF, whereas the brevilysin-L6 is not inhibited. Does not inhibit serine and cysteine proteases such as trypsin, chymotrypsin, thermolysin, and papain. The inhibition may occur by formation of a non-covalent complex between this protein and the proteinases at their metalloproteinase domains. The chain is Antihemorrhagic factor jMSF from Gloydius blomhoffii (Mamushi).